A 400-amino-acid polypeptide reads, in one-letter code: MQELEQAVNRSVRVIPQGEGRVTIEKDLSSEEMILNMGPQHPSTHGVLRLECKTDGEVVTEAEPYLGYLHRCFEKHAEVVDYPGIVPFVDRMDYLAAMNSEFAYCIAVEKLLDVEIPRRVEFMRVIVSELNRIASHLVAIGTYAIDLGAFTPFLFCFRDREHIMSLLEWASGARMLYNYIWIGGASFDFPPGFKERTAEFVNYFRPKALELQRLLTENEIFVKRTKGIGMMPPDVAVNYGWSGPMLRGSGVEWDLRKHDPYSIYPELDFKVCVPDGKHSDIGDSLSRHLVRAYEMVESLSMIEQCLDKMPDANGFDPRSAIAKRIRPKAGEVYGRAENPRGELGFYIVSDGKSTKPVRCKARSSCFVNLSAMKELSMGQLIPDLVAIIGSIDIVLGEVDR.

It belongs to the complex I 49 kDa subunit family. NDH-1 is composed of 14 different subunits. Subunits NuoB, C, D, E, F, and G constitute the peripheral sector of the complex.

It localises to the cell inner membrane. The catalysed reaction is a quinone + NADH + 5 H(+)(in) = a quinol + NAD(+) + 4 H(+)(out). NDH-1 shuttles electrons from NADH, via FMN and iron-sulfur (Fe-S) centers, to quinones in the respiratory chain. The immediate electron acceptor for the enzyme in this species is believed to be menaquinone. Couples the redox reaction to proton translocation (for every two electrons transferred, four hydrogen ions are translocated across the cytoplasmic membrane), and thus conserves the redox energy in a proton gradient. The protein is NADH-quinone oxidoreductase subunit D of Prosthecochloris aestuarii (strain DSM 271 / SK 413).